A 192-amino-acid chain; its full sequence is Xanthine phosphoribosyltransferase (192 aa).

Positions 20 and 27 each coordinate xanthine. Position 128–132 (128–132 (ANGDA)) interacts with 5-phospho-alpha-D-ribose 1-diphosphate. K156 contacts xanthine.

The protein belongs to the purine/pyrimidine phosphoribosyltransferase family. Xpt subfamily. Homodimer.

Its subcellular location is the cytoplasm. The enzyme catalyses XMP + diphosphate = xanthine + 5-phospho-alpha-D-ribose 1-diphosphate. It functions in the pathway purine metabolism; XMP biosynthesis via salvage pathway; XMP from xanthine: step 1/1. Converts the preformed base xanthine, a product of nucleic acid breakdown, to xanthosine 5'-monophosphate (XMP), so it can be reused for RNA or DNA synthesis. The protein is Xanthine phosphoribosyltransferase of Staphylococcus carnosus (strain TM300).